The primary structure comprises 158 residues: NAD(P)H-quinone oxidoreductase subunit J, chloroplastic (158 aa).

It belongs to the complex I 30 kDa subunit family. NDH is composed of at least 16 different subunits, 5 of which are encoded in the nucleus.

The protein resides in the plastid. It localises to the chloroplast thylakoid membrane. The enzyme catalyses a plastoquinone + NADH + (n+1) H(+)(in) = a plastoquinol + NAD(+) + n H(+)(out). It carries out the reaction a plastoquinone + NADPH + (n+1) H(+)(in) = a plastoquinol + NADP(+) + n H(+)(out). Functionally, NDH shuttles electrons from NAD(P)H:plastoquinone, via FMN and iron-sulfur (Fe-S) centers, to quinones in the photosynthetic chain and possibly in a chloroplast respiratory chain. The immediate electron acceptor for the enzyme in this species is believed to be plastoquinone. Couples the redox reaction to proton translocation, and thus conserves the redox energy in a proton gradient. The chain is NAD(P)H-quinone oxidoreductase subunit J, chloroplastic from Crucihimalaya wallichii (Rock-cress).